The following is a 307-amino-acid chain: Bifunctional protein FolD (307 aa).

Residues 170–172 (GRS), Ser-195, and Ile-236 each bind NADP(+).

Belongs to the tetrahydrofolate dehydrogenase/cyclohydrolase family. As to quaternary structure, homodimer.

It carries out the reaction (6R)-5,10-methylene-5,6,7,8-tetrahydrofolate + NADP(+) = (6R)-5,10-methenyltetrahydrofolate + NADPH. The catalysed reaction is (6R)-5,10-methenyltetrahydrofolate + H2O = (6R)-10-formyltetrahydrofolate + H(+). It functions in the pathway one-carbon metabolism; tetrahydrofolate interconversion. Functionally, catalyzes the oxidation of 5,10-methylenetetrahydrofolate to 5,10-methenyltetrahydrofolate and then the hydrolysis of 5,10-methenyltetrahydrofolate to 10-formyltetrahydrofolate. This chain is Bifunctional protein FolD, found in Sinorhizobium fredii (strain NBRC 101917 / NGR234).